The chain runs to 195 residues: Sec-independent protein translocase protein TatB (195 aa).

A helical membrane pass occupies residues F2 to G22. Residues V103–K125 show a composition bias toward basic and acidic residues. Residues V103–T195 form a disordered region. 2 stretches are compositionally biased toward polar residues: residues S127–A139 and V146–S155.

This sequence belongs to the TatB family. As to quaternary structure, the Tat system comprises two distinct complexes: a TatABC complex, containing multiple copies of TatA, TatB and TatC subunits, and a separate TatA complex, containing only TatA subunits. Substrates initially bind to the TatABC complex, which probably triggers association of the separate TatA complex to form the active translocon.

The protein resides in the cell membrane. Functionally, part of the twin-arginine translocation (Tat) system that transports large folded proteins containing a characteristic twin-arginine motif in their signal peptide across membranes. Together with TatC, TatB is part of a receptor directly interacting with Tat signal peptides. TatB may form an oligomeric binding site that transiently accommodates folded Tat precursor proteins before their translocation. The chain is Sec-independent protein translocase protein TatB from Corynebacterium jeikeium (strain K411).